The following is a 362-amino-acid chain: H-2 class I histocompatibility antigen, L-D alpha chain (362 aa).

Positions 1–24 are cleaved as a signal peptide; that stretch reads MGAMAPRTLLLLLAAALAPTQTRA. An alpha-1 region spans residues 25–114; that stretch reads GPHSMRYFET…LLGYYNQSAG (90 aa). The Extracellular segment spans residues 25–309; sequence GPHSMRYFET…PPPSTDSYMV (285 aa). Asparagine 110 is a glycosylation site (N-linked (GlcNAc...) asparagine). Positions 115 to 206 are alpha-2; that stretch reads GTHTLQWMYG…KNGNATLLRT (92 aa). An intrachain disulfide couples cysteine 125 to cysteine 188. N-linked (GlcNAc...) asparagine glycans are attached at residues asparagine 200 and asparagine 280. The alpha-3 stretch occupies residues 207-298; that stretch reads DSPKAHVTHH…GLPEPLTLRW (92 aa). The 89-residue stretch at 209 to 297 folds into the Ig-like C1-type domain; it reads PKAHVTHHPR…EGLPEPLTLR (89 aa). A disulfide bond links cysteine 227 and cysteine 283. The tract at residues 299–309 is connecting peptide; sequence EPPPSTDSYMV. A helical membrane pass occupies residues 310–331; the sequence is IVAVLGVLGAMAIIGAVVAFVM. At 332 to 362 the chain is on the cytoplasmic side; sequence KRRRNTGGKGGDYALAPGSQSSEMSLRDCKA. The interval 340 to 362 is disordered; the sequence is KGGDYALAPGSQSSEMSLRDCKA. Residues serine 353 and serine 356 each carry the phosphoserine modification.

This sequence belongs to the MHC class I family. In terms of assembly, heterodimer of an alpha chain and a beta chain (beta-2-microglobulin).

It is found in the membrane. Functionally, involved in the presentation of foreign antigens to the immune system. The polypeptide is H-2 class I histocompatibility antigen, L-D alpha chain (H2-L) (Mus musculus (Mouse)).